The chain runs to 84 residues: Large ribosomal subunit protein bL27 (84 aa).

The protein belongs to the bacterial ribosomal protein bL27 family.

The polypeptide is Large ribosomal subunit protein bL27 (Buchnera aphidicola subsp. Acyrthosiphon pisum (strain Tuc7)).